We begin with the raw amino-acid sequence, 133 residues long: Ribonuclease P protein component (133 aa).

This sequence belongs to the RnpA family. In terms of assembly, consists of a catalytic RNA component (M1 or rnpB) and a protein subunit.

It catalyses the reaction Endonucleolytic cleavage of RNA, removing 5'-extranucleotides from tRNA precursor.. RNaseP catalyzes the removal of the 5'-leader sequence from pre-tRNA to produce the mature 5'-terminus. It can also cleave other RNA substrates such as 4.5S RNA. The protein component plays an auxiliary but essential role in vivo by binding to the 5'-leader sequence and broadening the substrate specificity of the ribozyme. The sequence is that of Ribonuclease P protein component from Pseudomonas putida (strain ATCC 47054 / DSM 6125 / CFBP 8728 / NCIMB 11950 / KT2440).